The sequence spans 603 residues: Proline--tRNA ligase (603 aa).

Belongs to the class-II aminoacyl-tRNA synthetase family. ProS type 1 subfamily. Homodimer.

The protein resides in the cytoplasm. The enzyme catalyses tRNA(Pro) + L-proline + ATP = L-prolyl-tRNA(Pro) + AMP + diphosphate. Functionally, catalyzes the attachment of proline to tRNA(Pro) in a two-step reaction: proline is first activated by ATP to form Pro-AMP and then transferred to the acceptor end of tRNA(Pro). As ProRS can inadvertently accommodate and process non-cognate amino acids such as alanine and cysteine, to avoid such errors it has two additional distinct editing activities against alanine. One activity is designated as 'pretransfer' editing and involves the tRNA(Pro)-independent hydrolysis of activated Ala-AMP. The other activity is designated 'posttransfer' editing and involves deacylation of mischarged Ala-tRNA(Pro). The misacylated Cys-tRNA(Pro) is not edited by ProRS. The polypeptide is Proline--tRNA ligase (Paenarthrobacter aurescens (strain TC1)).